The primary structure comprises 359 residues: UDP-3-O-acylglucosamine N-acyltransferase (359 aa).

Catalysis depends on His256, which acts as the Proton acceptor.

Belongs to the transferase hexapeptide repeat family. LpxD subfamily. As to quaternary structure, homotrimer.

It catalyses the reaction a UDP-3-O-[(3R)-3-hydroxyacyl]-alpha-D-glucosamine + a (3R)-hydroxyacyl-[ACP] = a UDP-2-N,3-O-bis[(3R)-3-hydroxyacyl]-alpha-D-glucosamine + holo-[ACP] + H(+). It participates in bacterial outer membrane biogenesis; LPS lipid A biosynthesis. Functionally, catalyzes the N-acylation of UDP-3-O-acylglucosamine using 3-hydroxyacyl-ACP as the acyl donor. Is involved in the biosynthesis of lipid A, a phosphorylated glycolipid that anchors the lipopolysaccharide to the outer membrane of the cell. In Rhodopseudomonas palustris (strain HaA2), this protein is UDP-3-O-acylglucosamine N-acyltransferase.